Here is a 644-residue protein sequence, read N- to C-terminus: Arabinosyltransferase XEG113 (644 aa).

Over 1-17 the chain is Cytoplasmic; the sequence is MVEGWRNGFRDATNSKP. Residues 18–38 form a helical; Signal-anchor for type II membrane protein membrane-spanning segment; the sequence is LFVTIYATVIIGVLVSSFYVF. Residues 39–644 are Lumenal-facing; the sequence is SAIYSPTNGS…QTPEEDHPPL (606 aa). N-linked (GlcNAc...) asparagine glycosylation is found at Asn46 and Asn70. The DXD motif motif lies at 226–228; the sequence is DTD. N-linked (GlcNAc...) asparagine glycans are attached at residues Asn446 and Asn542.

Belongs to the glycosyltransferase 77 family.

Its subcellular location is the golgi apparatus membrane. Plays a role in the arabinosylation of cell wall components. Involved in the arabinosylation of extensin proteins in root hair cells. Extensins are structural glycoproteins present in cell walls and its arabinosylation is important for cell elongation, root hair cell development, lateral root development and root hair tip growth. The polypeptide is Arabinosyltransferase XEG113 (Arabidopsis thaliana (Mouse-ear cress)).